We begin with the raw amino-acid sequence, 302 residues long: 1,2-dihydroxynaphthalene dioxygenase (302 aa).

2 VOC domains span residues 9-124 and 149-270; these read ELGY…IFWG and GLGH…PGWR. H152 is a binding site for Fe cation. Substrate is bound by residues H152, 199–200, H215, and Y256; that span reads DH. H215 contacts Fe cation. A Fe cation-binding site is contributed by E266.

This sequence belongs to the extradiol ring-cleavage dioxygenase family. Fe(2+) is required as a cofactor.

It carries out the reaction naphthalene-1,2-diol + O2 = 2-hydroxychromene-2-carboxylate + H(+). It participates in aromatic compound metabolism; naphthalene degradation. With respect to regulation, inhibited by bathophenanthroline sulfonate, o-phenanthroline, 8-hydroxyquinoline, 2,2'-dipyridyl and p-chlormercuribenzoate. Also inhibited by Hg(2+), Cu(2+), Co(2+) and Fe(3+) ions. Involved in the naphthalene catabolic pathway. Catalyzes the meta-cleavage of 1,2-dihydroxynaphthalene (1,2-DHN) to yield 2-hydroxychromene-2-carboxylic acid. Can also cleave 3-methylcatechol and 4-methylcatechol. This is 1,2-dihydroxynaphthalene dioxygenase (nahC) from Pseudomonas putida (Arthrobacter siderocapsulatus).